We begin with the raw amino-acid sequence, 113 residues long: Large ribosomal subunit protein bL17 (113 aa).

It belongs to the bacterial ribosomal protein bL17 family. Part of the 50S ribosomal subunit. Contacts protein L32.

The polypeptide is Large ribosomal subunit protein bL17 (Clostridium tetani (strain Massachusetts / E88)).